The primary structure comprises 511 residues: Maturase K (511 aa).

This sequence belongs to the intron maturase 2 family. MatK subfamily.

It localises to the plastid. Its subcellular location is the chloroplast. In terms of biological role, usually encoded in the trnK tRNA gene intron. Probably assists in splicing its own and other chloroplast group II introns. The chain is Maturase K from Bromus inermis (Smooth brome grass).